The primary structure comprises 290 residues: Protease HtpX (290 aa).

A run of 2 helical transmembrane segments spans residues Ile-4–Leu-24 and Gly-36–Ile-56. His-142 contributes to the Zn(2+) binding site. Residue Glu-143 is part of the active site. His-146 serves as a coordination point for Zn(2+). 2 helical membrane-spanning segments follow: residues Gly-150–Ala-170 and Phe-193–Trp-213. Glu-219 contributes to the Zn(2+) binding site.

The protein belongs to the peptidase M48B family. The cofactor is Zn(2+).

Its subcellular location is the cell inner membrane. This Ectopseudomonas mendocina (strain ymp) (Pseudomonas mendocina) protein is Protease HtpX.